Reading from the N-terminus, the 103-residue chain is Large ribosomal subunit protein bL21 (103 aa).

This sequence belongs to the bacterial ribosomal protein bL21 family. In terms of assembly, part of the 50S ribosomal subunit. Contacts protein L20.

This protein binds to 23S rRNA in the presence of protein L20. The polypeptide is Large ribosomal subunit protein bL21 (Teredinibacter turnerae (strain ATCC 39867 / T7901)).